The chain runs to 184 residues: Large ribosomal subunit protein uL5 (184 aa).

This sequence belongs to the universal ribosomal protein uL5 family. In terms of assembly, part of the 50S ribosomal subunit; part of the 5S rRNA/L5/L18/L25 subcomplex. Contacts the 5S rRNA and the P site tRNA. Forms a bridge to the 30S subunit in the 70S ribosome.

This is one of the proteins that bind and probably mediate the attachment of the 5S RNA into the large ribosomal subunit, where it forms part of the central protuberance. In the 70S ribosome it contacts protein S13 of the 30S subunit (bridge B1b), connecting the 2 subunits; this bridge is implicated in subunit movement. Contacts the P site tRNA; the 5S rRNA and some of its associated proteins might help stabilize positioning of ribosome-bound tRNAs. The chain is Large ribosomal subunit protein uL5 from Syntrophotalea carbinolica (strain DSM 2380 / NBRC 103641 / GraBd1) (Pelobacter carbinolicus).